The following is a 155-amino-acid chain: MPKQNKYKGVSVDYRYGDESVARFINAVMLDGKKDVATRIVYDAFTIIAEKMNGESPLEVYRKAMSNIAPVVEVRSKRVGGATYQIPMEVKPSRRGALAFRWLKLYAKRRGGRSMAEKLAAELMDAANEQGASVKKRDEVHRMADANKAFAHFRF.

The protein belongs to the universal ribosomal protein uS7 family. In terms of assembly, part of the 30S ribosomal subunit. Contacts proteins S9 and S11.

Functionally, one of the primary rRNA binding proteins, it binds directly to 16S rRNA where it nucleates assembly of the head domain of the 30S subunit. Is located at the subunit interface close to the decoding center, probably blocks exit of the E-site tRNA. This Chlorobium phaeobacteroides (strain DSM 266 / SMG 266 / 2430) protein is Small ribosomal subunit protein uS7.